The chain runs to 661 residues: UvrABC system protein B (661 aa).

The Helicase ATP-binding domain maps to 25-182 (AGLSSKKRSQ…NDLINLQYER (158 aa)). Position 38–45 (38–45 (GITGSGKT)) interacts with ATP. The short motif at 91 to 114 (YYDYYQPEAYIARTDTFIEKDSSI) is the Beta-hairpin element. The 163-residue stretch at 430–592 (QIEDLISEIQ…IIPKTINRTI (163 aa)) folds into the Helicase C-terminal domain. The 36-residue stretch at 621-656 (KTHIDKLKKEMLKAASNLEFEQAAKLRDQLKTLEEA) folds into the UVR domain.

Belongs to the UvrB family. Forms a heterotetramer with UvrA during the search for lesions. Interacts with UvrC in an incision complex.

The protein localises to the cytoplasm. In terms of biological role, the UvrABC repair system catalyzes the recognition and processing of DNA lesions. A damage recognition complex composed of 2 UvrA and 2 UvrB subunits scans DNA for abnormalities. Upon binding of the UvrA(2)B(2) complex to a putative damaged site, the DNA wraps around one UvrB monomer. DNA wrap is dependent on ATP binding by UvrB and probably causes local melting of the DNA helix, facilitating insertion of UvrB beta-hairpin between the DNA strands. Then UvrB probes one DNA strand for the presence of a lesion. If a lesion is found the UvrA subunits dissociate and the UvrB-DNA preincision complex is formed. This complex is subsequently bound by UvrC and the second UvrB is released. If no lesion is found, the DNA wraps around the other UvrB subunit that will check the other stand for damage. The polypeptide is UvrABC system protein B (Rickettsia massiliae (strain Mtu5)).